We begin with the raw amino-acid sequence, 65 residues long: Large ribosomal subunit protein bL35 (65 aa).

The interval 1–65 (MPKMKTNRAA…GRLDRMLPYL (65 aa)) is disordered. Residues 10–44 (AAKRFRKTASGKYKAGHANRSHILTKKATKRKRNL) are compositionally biased toward basic residues. The segment covering 50–65 (VRAEDAGRLDRMLPYL) has biased composition (basic and acidic residues).

This sequence belongs to the bacterial ribosomal protein bL35 family.

This Xylella fastidiosa (strain M12) protein is Large ribosomal subunit protein bL35.